Reading from the N-terminus, the 314-residue chain is Small ribosomal subunit protein RACK1 (314 aa).

Thr10 carries the post-translational modification Phosphothreonine. One copy of the WD 1 repeat lies at 13–44; sequence GHSGWVTSLSTAPENPDILLSGSRDKSIILWN. Position 39 is a phosphoserine (Ser39). Residue Tyr52 is modified to Phosphotyrosine. WD repeat units lie at residues 61–91, 103–133, 146–178, 190–220, 231–260, and 281–311; these read GHSH…RLWD, GHTS…KIWN, GHSD…KVWD, GHTG…MLWD, EAKA…RIFD, and SSEP…RVWQ. Position 148 is a phosphoserine (Ser148). A phosphoserine mark is found at Ser242 and Ser255.

It belongs to the WD repeat G protein beta family. Ribosomal protein RACK1 subfamily. In terms of assembly, component of the small ribosomal subunit (SSU). Mature yeast ribosomes consist of a small (40S) and a large (60S) subunit. The 40S small subunit contains 1 molecule of ribosomal RNA (18S rRNA) and at least 33 different proteins. The large 60S subunit contains 3 rRNA molecules (25S, 5.8S and 5S rRNA) and at least 46 different proteins. RACK1 is located at the head of the SSU in the vicinity of the mRNA exit channel. RACK1 interacts with the mRNA-binding protein SCP16. RACK1 also exists simultaneously as a homodimer in a cytosolic non-ribosome-bound form. Interacts with pck2. Interacts with pat1/ran1.

It is found in the cytoplasm. It localises to the membrane. In terms of biological role, component of the ribosome, a large ribonucleoprotein complex responsible for the synthesis of proteins in the cell. The small ribosomal subunit (SSU) binds messenger RNAs (mRNAs) and translates the encoded message by selecting cognate aminoacyl-transfer RNA (tRNA) molecules. The large subunit (LSU) contains the ribosomal catalytic site termed the peptidyl transferase center (PTC), which catalyzes the formation of peptide bonds, thereby polymerizing the amino acids delivered by tRNAs into a polypeptide chain. The nascent polypeptides leave the ribosome through a tunnel in the LSU and interact with protein factors that function in enzymatic processing, targeting, and the membrane insertion of nascent chains at the exit of the ribosomal tunnel. Located at the head of the 40S ribosomal subunit in the vicinity of the mRNA exit channel, RACK1 serves as a scaffold protein that can recruit other proteins to the ribosome. Involved in induction of the ribosome quality control (RQC) pathway; a pathway that degrades nascent peptide chains during problematic translation. Involved in the negative regulation of translation of a specific subset of proteins. May be a receptor for protein kinase C in the regulation of actin cytoskeleton organization during cell wall synthesis and morphogenesis. Involved in the control of G2/M transition. May function as an anchoring protein for pat1/ran1 kinase. Negatively regulates the cell integrity transduction pathway by favoring translation of the tyrosine-phosphatases pyp1 and pyp2 that deactivate pmk1. Positively regulates the synthesis of the stress-responsive transcription factor Atf1 and the cytoplasmic catalase, a detoxificant enzyme induced by treatment with hydrogen peroxide. In Schizosaccharomyces pombe (strain 972 / ATCC 24843) (Fission yeast), this protein is Small ribosomal subunit protein RACK1.